We begin with the raw amino-acid sequence, 893 residues long: Nitrate reductase [NADPH] (893 aa).

Residues 1–83 (MSVTTQQPAV…KPTPDAHVPR (83 aa)) are disordered. A compositionally biased stretch (pro residues) spans 55 to 65 (PDFPLPPPANP). Over residues 71 to 83 (DIDKPTPDAHVPR) the composition is skewed to basic and acidic residues. Position 170 (cysteine 170) interacts with Mo-molybdopterin. The Cytochrome b5 heme-binding domain occupies 536–611 (NRIVELDELK…MPAYHIGTLS (76 aa)). 2 residues coordinate heme: histidine 571 and histidine 594. An FAD-binding FR-type domain is found at 641 to 752 (RTWSKALLSS…KGPIGKFEYL (112 aa)). Residues 695–698 (RSYT), 712–716 (LIKIY), 726–728 (KMT), serine 776, and threonine 779 contribute to the FAD site. 863–872 (LVLVCGPEGL) is a binding site for NADP(+).

This sequence belongs to the nitrate reductase family. Homodimer. FAD is required as a cofactor. Heme serves as cofactor. Requires Mo-molybdopterin as cofactor.

The catalysed reaction is nitrite + NADP(+) + H2O = nitrate + NADPH + H(+). In terms of biological role, nitrate reductase is a key enzyme involved in the first step of nitrate assimilation in plants, fungi and bacteria. This chain is Nitrate reductase [NADPH] (NIAD), found in Leptosphaeria maculans (Blackleg fungus).